A 447-amino-acid polypeptide reads, in one-letter code: UDP-N-acetylmuramate--L-alanine ligase (447 aa).

Position 108–114 (Gly-108–Ser-114) interacts with ATP.

It belongs to the MurCDEF family.

It localises to the cytoplasm. The catalysed reaction is UDP-N-acetyl-alpha-D-muramate + L-alanine + ATP = UDP-N-acetyl-alpha-D-muramoyl-L-alanine + ADP + phosphate + H(+). Its pathway is cell wall biogenesis; peptidoglycan biosynthesis. Functionally, cell wall formation. The chain is UDP-N-acetylmuramate--L-alanine ligase from Listeria welshimeri serovar 6b (strain ATCC 35897 / DSM 20650 / CCUG 15529 / CIP 8149 / NCTC 11857 / SLCC 5334 / V8).